A 98-amino-acid chain; its full sequence is Flagellar hook-basal body complex protein FliE (98 aa).

The protein belongs to the FliE family.

The protein resides in the bacterial flagellum basal body. The sequence is that of Flagellar hook-basal body complex protein FliE from Listeria monocytogenes serovar 1/2a (strain ATCC BAA-679 / EGD-e).